A 332-amino-acid polypeptide reads, in one-letter code: Eukaryotic translation initiation factor 3 subunit I (332 aa).

4 WD repeats span residues 8 to 47, 48 to 87, 144 to 182, and 279 to 318; these read GHER…GTYH, GHQG…LLHT, DESK…LLSS, and GHFG…FDFM.

This sequence belongs to the eIF-3 subunit I family. In terms of assembly, component of the eukaryotic translation initiation factor 3 (eIF-3) complex.

The protein resides in the cytoplasm. Component of the eukaryotic translation initiation factor 3 (eIF-3) complex, which is involved in protein synthesis of a specialized repertoire of mRNAs and, together with other initiation factors, stimulates binding of mRNA and methionyl-tRNAi to the 40S ribosome. The eIF-3 complex specifically targets and initiates translation of a subset of mRNAs involved in cell proliferation. In Phaeosphaeria nodorum (strain SN15 / ATCC MYA-4574 / FGSC 10173) (Glume blotch fungus), this protein is Eukaryotic translation initiation factor 3 subunit I.